A 327-amino-acid polypeptide reads, in one-letter code: Glutamyl endopeptidase (327 aa).

An N-terminal signal peptide occupies residues 1-29 (MKGKFLKVSSLFVATLTTATLVSSPAANA). A propeptide spanning residues 30–68 (LSSKAMDNHPQQSQSSKQQTPKIQKGGNLKPLEQREHAN) is cleaved from the precursor. The disordered stretch occupies residues 33-61 (KAMDNHPQQSQSSKQQTPKIQKGGNLKPL). Residues 40–54 (QQSQSSKQQTPKIQK) show a composition bias toward low complexity. Residues H119, D161, and S237 each act as charge relay system in the active site. Residues 283 to 327 (FANDDQPNNPDNPDNPNNPDNPNNPNNPDNPDNGDNNNSDNPDAA) form a disordered region. A compositionally biased stretch (low complexity) spans 286–327 (DDQPNNPDNPDNPNNPDNPNNPNNPDNPDNGDNNNSDNPDAA). Repeat copies occupy residues 289–291 (PNN), 292–294 (PDN), 295–297 (PDN), 298–300 (PNN), 301–303 (PDN), 304–306 (PNN), 307–309 (PNN), 310–312 (PDN), and 313–315 (PDN). The interval 289-315 (PNNPDNPDNPNNPDNPNNPNNPDNPDN) is 9 X 3 AA repeats of P-[DN]-N.

The protein belongs to the peptidase S1B family. Post-translationally, proteolytically cleaved by aureolysin (aur). This cleavage leads to the activation of SspA.

The protein localises to the secreted. The catalysed reaction is Preferential cleavage: Glu-|-Xaa, Asp-|-Xaa.. Functionally, preferentially cleaves peptide bonds on the carboxyl-terminal side of aspartate and glutamate. Along with other extracellular proteases it is involved in colonization and infection of human tissues. Required for proteolytic maturation of thiol protease SspB and inactivation of SspC, an inhibitor of SspB. It is the most important protease for degradation of fibronectin-binding protein (FnBP) and surface protein A, which are involved in adherence to host cells. May also protect bacteria against host defense mechanism by cleaving the immunoglobulin classes IgG, IgA and IgM. May be involved in the stability of secreted lipases. In Staphylococcus aureus (strain MW2), this protein is Glutamyl endopeptidase (sspA).